A 712-amino-acid polypeptide reads, in one-letter code: Effector protein HopM1 (712 aa).

Residues 22-58 form a disordered region; the sequence is DTVPAQTAHPNAVTAGMNPPLTPDQSGSHATESSSAG. A compositionally biased stretch (polar residues) spans 44–57; that stretch reads PDQSGSHATESSSA.

In terms of assembly, interacts with the chaperone ShcM. Interacts with host plant BIG5/ATMIN7.

The protein localises to the secreted. It localises to the host membrane. Functionally, involved in the suppression of basal resistance and promotion of disease symptoms in plants. Mediates the ubiquitination and degradation, via the host proteasome, of a low-abundance immunity-associated protein in Arabidopsis thaliana. May be involved in the inhibition of a host vesicle trafficking pathway. In Pseudomonas syringae pv. tomato (strain ATCC BAA-871 / DC3000), this protein is Effector protein HopM1 (hopM1).